Here is a 227-residue protein sequence, read N- to C-terminus: ATP synthase subunit a (227 aa).

6 helical membrane-spanning segments follow: residues 14–34, 69–89, 98–118, 137–157, 169–189, and 205–223; these read LLNI…FVSF, WVVL…IGLF, QLSM…VYGF, LLVP…PLAL, HLLM…SVML, and IAVA…TLYL.

Belongs to the ATPase A chain family. As to quaternary structure, F-type ATPases have 2 components, CF(1) - the catalytic core - and CF(0) - the membrane proton channel. CF(1) has five subunits: alpha(3), beta(3), gamma(1), delta(1), epsilon(1). CF(0) has three main subunits: a, b and c.

It is found in the mitochondrion inner membrane. Functionally, mitochondrial membrane ATP synthase (F(1)F(0) ATP synthase or Complex V) produces ATP from ADP in the presence of a proton gradient across the membrane which is generated by electron transport complexes of the respiratory chain. F-type ATPases consist of two structural domains, F(1) - containing the extramembraneous catalytic core and F(0) - containing the membrane proton channel, linked together by a central stalk and a peripheral stalk. During catalysis, ATP synthesis in the catalytic domain of F(1) is coupled via a rotary mechanism of the central stalk subunits to proton translocation. Key component of the proton channel; it may play a direct role in the translocation of protons across the membrane. This Branchiostoma floridae (Florida lancelet) protein is ATP synthase subunit a (ATP6).